Here is a 73-residue protein sequence, read N- to C-terminus: Potassium channel toxin alpha-KTx 27.1 (73 aa).

An N-terminal signal peptide occupies residues 1-23 (MKFLFLTLFVCCFIAVLVIPSEA).

This sequence belongs to the short scorpion toxin superfamily. Potassium channel inhibitor family. Alpha-KTx 27 subfamily. Contains 4 disulfide bonds. As to expression, expressed by the venom gland.

The protein localises to the secreted. The protein is Potassium channel toxin alpha-KTx 27.1 of Buthus israelis (Israeli scorpion).